The chain runs to 210 residues: Somatotropin-2 (210 aa).

The signal sequence occupies residues 1 to 22 (MARALVLLSVVLVSLLVNQGRA). Zn(2+) is bound at residue His-38. A disulfide bridge connects residues Cys-71 and Cys-183. Glu-192 lines the Zn(2+) pocket. Cys-200 and Cys-208 form a disulfide bridge.

This sequence belongs to the somatotropin/prolactin family.

The protein localises to the secreted. Functionally, growth hormone plays an important role in growth control and is involved in the regulation of several anabolic processes. Implicated as an osmoregulatory substance important for seawater adaptation. This chain is Somatotropin-2 (gh2), found in Carassius auratus (Goldfish).